Here is a 113-residue protein sequence, read N- to C-terminus: Hydrogenase maturation factor HypA (113 aa).

His-2 serves as a coordination point for Ni(2+). 4 residues coordinate Zn(2+): Cys-73, Cys-76, Cys-89, and Cys-92.

It belongs to the HypA/HybF family.

Its function is as follows. Involved in the maturation of [NiFe] hydrogenases. Required for nickel insertion into the metal center of the hydrogenase. This is Hydrogenase maturation factor HypA from Rhodopseudomonas palustris (strain TIE-1).